The following is a 552-amino-acid chain: Carboxypeptidase Y homolog A (552 aa).

Residues 1–17 form the signal peptide; the sequence is MRVLPATLLVGAATAAT. Positions 18-133 are excised as a propeptide; it reads PAQQVLGGLQ…KLEAYDLRIK (116 aa). Disulfide bonds link Cys188/Cys428, Cys322/Cys336, Cys346/Cys369, Cys353/Cys362, and Cys391/Cys398. N-linked (GlcNAc...) asparagine glycosylation is present at Asn219. The active site involves Ser275. The active site involves Asp467. Residue Asn518 is glycosylated (N-linked (GlcNAc...) asparagine). His529 is a catalytic residue.

This sequence belongs to the peptidase S10 family.

It localises to the vacuole. It carries out the reaction Release of a C-terminal amino acid with broad specificity.. In terms of biological role, vacuolar carboxypeptidase involved in degradation of small peptides. Digests preferentially peptides containing an aliphatic or hydrophobic residue in P1' position, as well as methionine, leucine or phenylalanine in P1 position of ester substrate. The sequence is that of Carboxypeptidase Y homolog A (cpyA) from Emericella nidulans (strain FGSC A4 / ATCC 38163 / CBS 112.46 / NRRL 194 / M139) (Aspergillus nidulans).